We begin with the raw amino-acid sequence, 262 residues long: Cytochrome c oxidase subunit 3 (262 aa).

7 helical membrane-spanning segments follow: residues leucine 11–glycine 31, leucine 32–valine 52, glycine 83–phenylalanine 103, leucine 125–tryptophan 147, alanine 160–tryptophan 180, phenylalanine 198–valine 218, and alanine 240–tryptophan 260.

Belongs to the cytochrome c oxidase subunit 3 family. As to quaternary structure, component of the cytochrome c oxidase (complex IV, CIV), a multisubunit enzyme composed of a catalytic core of 3 subunits and several supernumerary subunits. The complex exists as a monomer or a dimer and forms supercomplexes (SCs) in the inner mitochondrial membrane with ubiquinol-cytochrome c oxidoreductase (cytochrome b-c1 complex, complex III, CIII).

It localises to the mitochondrion inner membrane. It catalyses the reaction 4 Fe(II)-[cytochrome c] + O2 + 8 H(+)(in) = 4 Fe(III)-[cytochrome c] + 2 H2O + 4 H(+)(out). In terms of biological role, component of the cytochrome c oxidase, the last enzyme in the mitochondrial electron transport chain which drives oxidative phosphorylation. The respiratory chain contains 3 multisubunit complexes succinate dehydrogenase (complex II, CII), ubiquinol-cytochrome c oxidoreductase (cytochrome b-c1 complex, complex III, CIII) and cytochrome c oxidase (complex IV, CIV), that cooperate to transfer electrons derived from NADH and succinate to molecular oxygen, creating an electrochemical gradient over the inner membrane that drives transmembrane transport and the ATP synthase. Cytochrome c oxidase is the component of the respiratory chain that catalyzes the reduction of oxygen to water. Electrons originating from reduced cytochrome c in the intermembrane space (IMS) are transferred via the dinuclear copper A center (CU(A)) of subunit 2 and heme A of subunit 1 to the active site in subunit 1, a binuclear center (BNC) formed by heme A3 and copper B (CU(B)). The BNC reduces molecular oxygen to 2 water molecules using 4 electrons from cytochrome c in the IMS and 4 protons from the mitochondrial matrix. This chain is Cytochrome c oxidase subunit 3 (COIII), found in Branchiostoma floridae (Florida lancelet).